Consider the following 402-residue polypeptide: D-galactonate dehydratase family member EGBG_02030 (402 aa).

Aspartate 207 is a binding site for Mg(2+). Residue histidine 209 coordinates D-arabinonate. Mg(2+) is bound by residues glutamate 233 and glutamate 259. D-arabinonate is bound by residues glutamate 259, arginine 280, histidine 309, and glutamate 336.

The protein belongs to the mandelate racemase/muconate lactonizing enzyme family. GalD subfamily.

Functionally, has no detectable activity with D-mannonate and with a panel of 70 other acid sugars (in vitro), in spite of the conservation of the residues that are expected to be important for catalytic activity and cofactor binding. May have evolved a divergent function. This chain is D-galactonate dehydratase family member EGBG_02030, found in Enterococcus gallinarum (strain EG2).